The following is a 256-amino-acid chain: Small ribosomal subunit protein eS1 (256 aa).

Ala2 carries the N-acetylalanine; partial modification.

Belongs to the eukaryotic ribosomal protein eS1 family. Component of the small ribosomal subunit. Mature ribosomes consist of a small (40S) and a large (60S) subunit. The 40S subunit contains about 33 different proteins and 1 molecule of RNA (18S). The 60S subunit contains about 49 different proteins and 3 molecules of RNA (25S, 5.8S and 5S).

It is found in the cytoplasm. In Lentinula edodes (Shiitake mushroom), this protein is Small ribosomal subunit protein eS1.